The chain runs to 629 residues: tRNA uridine 5-carboxymethylaminomethyl modification enzyme MnmG (629 aa).

13 to 18 (GGGHAG) provides a ligand contact to FAD. NAD(+) is bound at residue 273–287 (GPRYCPSIEDKVNRF).

This sequence belongs to the MnmG family. As to quaternary structure, homodimer. Heterotetramer of two MnmE and two MnmG subunits. The cofactor is FAD.

It localises to the cytoplasm. NAD-binding protein involved in the addition of a carboxymethylaminomethyl (cmnm) group at the wobble position (U34) of certain tRNAs, forming tRNA-cmnm(5)s(2)U34. The polypeptide is tRNA uridine 5-carboxymethylaminomethyl modification enzyme MnmG (Shewanella pealeana (strain ATCC 700345 / ANG-SQ1)).